We begin with the raw amino-acid sequence, 494 residues long: Glycogen synthase (494 aa).

ADP-alpha-D-glucose is bound at residue lysine 15.

The protein belongs to the glycosyltransferase 1 family. Bacterial/plant glycogen synthase subfamily.

The catalysed reaction is [(1-&gt;4)-alpha-D-glucosyl](n) + ADP-alpha-D-glucose = [(1-&gt;4)-alpha-D-glucosyl](n+1) + ADP + H(+). It participates in glycan biosynthesis; glycogen biosynthesis. In terms of biological role, synthesizes alpha-1,4-glucan chains using ADP-glucose. This Paramagnetospirillum magneticum (strain ATCC 700264 / AMB-1) (Magnetospirillum magneticum) protein is Glycogen synthase.